The chain runs to 670 residues: Tyramine beta-hydroxylase (670 aa).

Residues 26 to 35 (HHQLAYHHHK) show a composition bias toward basic residues. The segment at 26–63 (HHQLAYHHHKQEQQQQQQQQQQQQAKQKQKQNGVQQGR) is disordered. The segment covering 38–61 (QQQQQQQQQQQQAKQKQKQNGVQQ) has biased composition (low complexity). Residues 65-81 (PTFMPVMLLLLMATLLT) traverse the membrane as a helical segment. The DOMON domain occupies 104–220 (KEIKLSWMVD…GTMYVVWARG (117 aa)). Asn-235 carries N-linked (GlcNAc...) asparagine glycosylation. Tyr-281 is an active-site residue. Disulfide bonds link Cys-283–Cys-334 and Cys-319–Cys-344. His-312 and His-313 together coordinate Cu(2+). His-382, His-461, His-463, and Met-536 together coordinate Cu(2+). Cystine bridges form between Cys-439-Cys-552, Cys-443-Cys-613, and Cys-515-Cys-537. The active site involves His-461. An N-linked (GlcNAc...) asparagine glycan is attached at Asn-614.

This sequence belongs to the copper type II ascorbate-dependent monooxygenase family. Is most likely a monomer under physiological conditions, although under conditions of high pH and low ionic strength the dimeric form predominates. Both forms are equally active. The cofactor is Cu(2+). Present in head and in neurons innervating the oviduct (at protein level).

It is found in the membrane. It carries out the reaction tyramine + L-ascorbate + O2 = (R)-octopamine + L-dehydroascorbate + H2O. Catalyzes the hydroxylation of tyramine into octopamine, a neurotransmitter involved in ovulation and locomotion. Functions in an amine-mediated Bacc-dependent signaling pathway that negatively regulates acute ethanol sensitivity. Involved in facilitation of nociceptive escape behavior in response to potentially damaging stimuli, such as high temperatures. This chain is Tyramine beta-hydroxylase (Tbh), found in Drosophila melanogaster (Fruit fly).